The following is a 159-amino-acid chain: MNITIITVGKIKEKYLRDAIEEYSKRLGRYCKLDIVELVDEKTPDNASEKEEEVIKEKEGQGILNKIKDNMFVIAMDLGGKQLTSEEFAGYIDNLGVTGNPNIAFIIGGSLGISKSVLARANYKLCFSKMTFPHQLFRVMLLEQIYRGFRIIKGEPYHK.

S-adenosyl-L-methionine contacts are provided by residues Gly-108 and 127–132; that span reads FSKMTF.

This sequence belongs to the RNA methyltransferase RlmH family. In terms of assembly, homodimer.

Its subcellular location is the cytoplasm. The catalysed reaction is pseudouridine(1915) in 23S rRNA + S-adenosyl-L-methionine = N(3)-methylpseudouridine(1915) in 23S rRNA + S-adenosyl-L-homocysteine + H(+). Functionally, specifically methylates the pseudouridine at position 1915 (m3Psi1915) in 23S rRNA. This chain is Ribosomal RNA large subunit methyltransferase H, found in Clostridium beijerinckii (strain ATCC 51743 / NCIMB 8052) (Clostridium acetobutylicum).